A 187-amino-acid chain; its full sequence is High-affinity copper transporter ctrA2 (187 aa).

2 helical membrane-spanning segments follow: residues 44 to 64 (YAGTCIFLVVLAIINRCLVAF) and 137 to 157 (AAIFLCITGVSYLLMLAVMTM).

This sequence belongs to the copper transporter (Ctr) (TC 1.A.56) family. SLC31A subfamily.

The protein resides in the cell membrane. It carries out the reaction Cu(2+)(in) = Cu(2+)(out). High-affinity copper transporter of plasma membrane that mediates copper uptake under low copper conditions. The mechanism driving the transmembrane transport of copper has still to be determined. Acts as a potential virulence factor. This Aspergillus fumigatus (strain ATCC MYA-4609 / CBS 101355 / FGSC A1100 / Af293) (Neosartorya fumigata) protein is High-affinity copper transporter ctrA2.